We begin with the raw amino-acid sequence, 203 residues long: Putative B3 domain-containing protein At1g50220 (203 aa).

The segment at residues 99–195 is a DNA-binding region (TF-B3); it reads DIVGNVALPK…KFIVLNFQHK (97 aa).

Its subcellular location is the nucleus. This Arabidopsis thaliana (Mouse-ear cress) protein is Putative B3 domain-containing protein At1g50220.